A 711-amino-acid polypeptide reads, in one-letter code: Ribosomal RNA large subunit methyltransferase K/L (711 aa).

In terms of domain architecture, THUMP spans 42–153 (DAQRAVLWSR…KGRATISVDL (112 aa)).

It belongs to the methyltransferase superfamily. RlmKL family.

It is found in the cytoplasm. It carries out the reaction guanosine(2445) in 23S rRNA + S-adenosyl-L-methionine = N(2)-methylguanosine(2445) in 23S rRNA + S-adenosyl-L-homocysteine + H(+). It catalyses the reaction guanosine(2069) in 23S rRNA + S-adenosyl-L-methionine = N(2)-methylguanosine(2069) in 23S rRNA + S-adenosyl-L-homocysteine + H(+). In terms of biological role, specifically methylates the guanine in position 2445 (m2G2445) and the guanine in position 2069 (m7G2069) of 23S rRNA. The sequence is that of Ribosomal RNA large subunit methyltransferase K/L from Xanthomonas oryzae pv. oryzae (strain KACC10331 / KXO85).